The sequence spans 589 residues: TAF5-like RNA polymerase II p300/CBP-associated factor-associated factor 65 kDa subunit 5L (589 aa).

WD repeat units follow at residues 266 to 305 (NTEQ…LKSE), 340 to 379 (GHCG…NTVL), 382 to 421 (GHAY…PLRI), 424 to 463 (GHLA…SVRL), 466 to 505 (GHRG…LFKE), and 508 to 547 (GHTD…CNTP).

It belongs to the WD repeat TAF5 family. As to quaternary structure, the PCAF complex is composed of a number of TBP-associated factors (TAFS), such as TAF5, TAF5L, TAF6, TAF6L, TAF9, TAF10 and TAF12, PCAF, and also PCAF-associated factors (PAFs), such as TADA2L/ADA2, TADA3L/ADA3 and SPT3. Component of the STAGA transcription coactivator-HAT complex, at least composed of SUPT3H, GCN5L2, TAF5L, TAF6L, SUPT7L, TADA3L, TAD1L, TAF10, TAF12, TRRAP and TAF9.

It localises to the nucleus. Its function is as follows. Functions as a component of the PCAF complex. The PCAF complex is capable of efficiently acetylating histones in a nucleosomal context. The PCAF complex could be considered as the human version of the yeast SAGA complex. With TAF6L, acts as an epigenetic regulator essential for somatic reprogramming. Regulates target genes through H3K9ac deposition and MYC recruitment which trigger MYC regulatory network to orchestrate gene expression programs to control embryonic stem cell state. The chain is TAF5-like RNA polymerase II p300/CBP-associated factor-associated factor 65 kDa subunit 5L from Mus musculus (Mouse).